Reading from the N-terminus, the 351-residue chain is sn-glycerol-3-phosphate import ATP-binding protein UgpC (351 aa).

The 232-residue stretch at 4-235 (IVLDNVRKSY…PASTFVATFI (232 aa)) folds into the ABC transporter domain. ATP is bound at residue 37-44 (GPSGCGKS).

It belongs to the ABC transporter superfamily. sn-glycerol-3-phosphate importer (TC 3.A.1.1.3) family. The complex is composed of two ATP-binding proteins (UgpC), two transmembrane proteins (UgpA and UgpE) and a solute-binding protein (UgpB).

Its subcellular location is the cell inner membrane. It catalyses the reaction sn-glycerol 3-phosphate(out) + ATP + H2O = sn-glycerol 3-phosphate(in) + ADP + phosphate + H(+). In terms of biological role, part of the ABC transporter complex UgpBAEC involved in sn-glycerol-3-phosphate (G3P) import. Responsible for energy coupling to the transport system. The protein is sn-glycerol-3-phosphate import ATP-binding protein UgpC of Brucella abortus (strain 2308).